The sequence spans 364 residues: Sec-independent protein translocase protein TatC (364 aa).

7 helical membrane-spanning segments follow: residues 42–62 (IALL…PRIF), 107–127 (MIAA…SFIT), 139–159 (LTFV…AYLT), 160–180 (LSTG…SVLD), 194–214 (IFGL…AGIV), 225–245 (PEIF…DPFT), and 246–266 (MLAL…IGWL). A disordered region spans residues 277-364 (TSPYADLDDD…STDVTHGDIT (88 aa)). A compositionally biased stretch (acidic residues) spans 282–295 (DLDDDETSPLDFDD). Positions 301–320 (AASAGPAATATSPGTANPPG) are enriched in low complexity. A compositionally biased stretch (polar residues) spans 324-344 (PPGTANPVGTANPVGTGSSTP).

Belongs to the TatC family. The Tat system comprises two distinct complexes: a TatABC complex, containing multiple copies of TatA, TatB and TatC subunits, and a separate TatA complex, containing only TatA subunits. Substrates initially bind to the TatABC complex, which probably triggers association of the separate TatA complex to form the active translocon.

It is found in the cell membrane. In terms of biological role, part of the twin-arginine translocation (Tat) system that transports large folded proteins containing a characteristic twin-arginine motif in their signal peptide across membranes. Together with TatB, TatC is part of a receptor directly interacting with Tat signal peptides. This chain is Sec-independent protein translocase protein TatC, found in Frankia casuarinae (strain DSM 45818 / CECT 9043 / HFP020203 / CcI3).